A 918-amino-acid polypeptide reads, in one-letter code: Cell cycle and apoptosis regulator protein 2 (918 aa).

Residues 1–35 (MSQFKRQRINPLPGGRNFSGTASTSLLGPPPGLLT) are disordered. At T35 the chain carries Phosphothreonine. K112 is modified (N6-acetyllysine; by KAT8). Position 123 is an N6-methyllysine (K123). A Phosphoserine modification is found at S124. 3 disordered regions span residues 179 to 219 (NRFP…KPRH), 446 to 510 (KAAE…PAVI), and 568 to 637 (VSPP…ASED). R180 is subject to Omega-N-methylarginine. Position 215 is an N6-acetyllysine; by KAT8 (K215). 2 stretches are compositionally biased toward low complexity: residues 447 to 468 (AAEA…EQAP) and 482 to 492 (AETPEATTQQE). At T454 the chain carries Phosphothreonine; by ATM, ATR and CK2. T484 is modified (phosphothreonine). S569 carries the post-translational modification Phosphoserine. Basic and acidic residues predominate over residues 572 to 597 (EPEKEEAAKEEEAIKEEVVKEPKDEA). K586 participates in a covalent cross-link: Glycyl lysine isopeptide (Lys-Gly) (interchain with G-Cter in SUMO2 and SUMO3); alternate. Residue K586 forms a Glycyl lysine isopeptide (Lys-Gly) (interchain with G-Cter in SUMO2); alternate linkage. The tract at residues 605-665 (ESEAPLKEDG…EEFAGAKLED (61 aa)) is interaction with MCC. Phosphoserine occurs at positions 622, 670, 673, 676, 682, and 803. The segment at 699–918 (DCLLAFVFFD…VEKEEPAPSN (220 aa)) is interaction with NR1D1. Positions 824-904 (LENRIHTLEL…QLEIQRVVEK (81 aa)) form a coiled coil. T892 is modified (phosphothreonine).

As to quaternary structure, component of the DBIRD complex. Interacts with ZNF326/ZIRD; the interaction is direct. Interacts (via N-terminus) with SIRT1, which inhibits the deacetylation of substrates. Interacts (via N-terminus) with SUV39H1; this interaction abolishes the interaction with SIRT1. Component of a nuclear receptor-mediated transcription complex composed of at least ZNF335, CCAR2 and EMSY; the complex stimulates the transcription of nuclear receptor target genes such as SOX9 and HOXA1. Within the complex interacts with EMSY and interacts with ZNF335 (via C-terminus). Components of this complex may associate with components of a histone methylation complex to form a complex at least composed of ZNF335, HCFC1, CCAR2, EMSY, MKI67, RBBP5, ASH2L and WDR5. Within this complex, interacts with ASH2L. Interacts with NR1D1. Interacts (via N-terminus) with ESR1 and ESR2. Interacts (via N-terminus) with HDAC3 (via C-terminus). Interacts with HDAC1 and MED2F. Interacts with MCC. Interacts (via N-terminus) with NR1H2 and NR1H3 in a ligand-independent manner. Interacts with CSNK2A1. Interacts (via N-terminus) with p53/TP53. Interacts (via N-terminus) with BRCA1 (via the BRCT domains). Interacts (via N-terminus) with CHEK2 (via protein kinase domain). Interacts with PSEM3. Interacts (via N-terminus) with PSIA3 and SENP1. The sumoylated form shows a preferential interaction with SIRT1 as compared to its unmodified form. Interacts with CECR2; may form part of the CERF-1 and/or CEF-5 ISWI chromatin remodeling complexes in embryonic stem cells. ATM/ATR-mediated phosphorylation at Thr-454 upon DNA damage promotes binding to SIRT1. Phosphorylation at Thr-454 promotes its sumoylation by switching the binding partner of CCAR2 from SENP1 to PIAS3. Post-translationally, acetylation at Lys-112 and Lys-215 by KAT8 prevents inhibitory binding to SIRT1 and increases its deacetylase activity. In terms of processing, genotoxic stress induces its sumoylation and sumoylation promotes the SIRT1-CCAR2 interaction which in turn inhibits SIRT1-mediated deacetylation of p53/TP53. Sumoylation leads to transcriptional activation of p53/TP53 by sequestering SIRT1 from p53/TP53. Desumoylated by SENP1.

The protein localises to the nucleus. It is found in the cytoplasm. The protein resides in the cytoskeleton. It localises to the spindle. Its function is as follows. Core component of the DBIRD complex, a multiprotein complex that acts at the interface between core mRNP particles and RNA polymerase II (RNAPII) and integrates transcript elongation with the regulation of alternative splicing: the DBIRD complex affects local transcript elongation rates and alternative splicing of a large set of exons embedded in (A + T)-rich DNA regions. Inhibits SIRT1 deacetylase activity leading to increasing levels of p53/TP53 acetylation and p53-mediated apoptosis. Inhibits SUV39H1 methyltransferase activity. Mediates ligand-dependent transcriptional activation by nuclear hormone receptors. Plays a critical role in maintaining genomic stability and cellular integrity following UV-induced genotoxic stress. Regulates the circadian expression of the core clock components NR1D1 and BMAL1. Enhances the transcriptional repressor activity of NR1D1 through stabilization of NR1D1 protein levels by preventing its ubiquitination and subsequent degradation. Represses the ligand-dependent transcriptional activation function of ESR2. Acts as a regulator of PCK1 expression and gluconeogenesis by a mechanism that involves, at least in part, both NR1D1 and SIRT1. Negatively regulates the deacetylase activity of HDAC3 and can alter its subcellular localization. Positively regulates the beta-catenin pathway (canonical Wnt signaling pathway) and is required for MCC-mediated repression of the beta-catenin pathway. Represses ligand-dependent transcriptional activation function of NR1H2 and NR1H3 and inhibits the interaction of SIRT1 with NR1H3. Plays an important role in tumor suppression through p53/TP53 regulation; stabilizes p53/TP53 by affecting its interaction with ubiquitin ligase MDM2. Represses the transcriptional activator activity of BRCA1. Inhibits SIRT1 in a CHEK2 and PSEM3-dependent manner and inhibits the activity of CHEK2 in vitro. In Pongo abelii (Sumatran orangutan), this protein is Cell cycle and apoptosis regulator protein 2 (CCAR2).